The sequence spans 893 residues: Translation initiation factor IF-2 (893 aa).

Positions 49–303 (LNREAGSGPD…KGSSLQQGFQ (255 aa)) are disordered. Polar residues predominate over residues 68–82 (STLNIPGTGGKSKSV). Composition is skewed to basic and acidic residues over residues 93–159 (VKRD…KDKV) and 166–216 (DMTK…EENK). The segment covering 254–269 (GRGRNAKAARPAKKGN) has biased composition (basic residues). Residues 270 to 283 (KHAESKADREEARA) are compositionally biased toward basic and acidic residues. Positions 392–561 (PRAPVVTIMG…LLQAEVLELK (170 aa)) constitute a tr-type G domain. The interval 401–408 (GHVDHGKT) is G1. 401–408 (GHVDHGKT) contributes to the GTP binding site. Residues 426–430 (GITQH) are G2. The segment at 447–450 (DTPG) is G3. GTP-binding positions include 447–451 (DTPGH) and 501–504 (NKID). A G4 region spans residues 501–504 (NKID). Residues 537–539 (SAK) are G5.

Belongs to the TRAFAC class translation factor GTPase superfamily. Classic translation factor GTPase family. IF-2 subfamily.

It is found in the cytoplasm. One of the essential components for the initiation of protein synthesis. Protects formylmethionyl-tRNA from spontaneous hydrolysis and promotes its binding to the 30S ribosomal subunits. Also involved in the hydrolysis of GTP during the formation of the 70S ribosomal complex. This chain is Translation initiation factor IF-2, found in Salmonella arizonae (strain ATCC BAA-731 / CDC346-86 / RSK2980).